The following is a 770-amino-acid chain: Probable methyltransferase PMT25 (770 aa).

Over 1–17 (MAMGKYSRVDGKKSSSY) the chain is Cytoplasmic. Residues 18-38 (GLTITIVLLLSLCLVGTWMFM) traverse the membrane as a helical; Signal-anchor for type II membrane protein segment. Topologically, residues 39 to 770 (SSWSAPADSA…ETETIKSAIA (732 aa)) are lumenal. Positions 44 to 238 (PADSAGYSST…SSISKDQSSY (195 aa)) are disordered. Over residues 55–79 (TAKDVSKNDLRKEEGDRDPKNFSDE) the composition is skewed to basic and acidic residues. Asn-75 and Asn-107 each carry an N-linked (GlcNAc...) asparagine glycan. Residues 92–109 (QVKTDSENSAEGNQVNES) are compositionally biased toward polar residues. Basic and acidic residues-rich tracts occupy residues 110–124 (SGEK…KESD) and 131–177 (DGEK…KAEE). Asn-163 and Asn-178 each carry an N-linked (GlcNAc...) asparagine glycan. Polar residues-rich tracts occupy residues 205-220 (ESST…LVES) and 227-238 (QQSSISKDQSSY). 2 N-linked (GlcNAc...) asparagine glycosylation sites follow: Asn-244 and Asn-363.

The protein belongs to the methyltransferase superfamily.

It is found in the golgi apparatus membrane. The chain is Probable methyltransferase PMT25 from Arabidopsis thaliana (Mouse-ear cress).